A 301-amino-acid chain; its full sequence is Protease HtpX homolog (301 aa).

2 consecutive transmembrane segments (helical) span residues 11–31 and 34–54; these read VLLL…IAGA and NSAF…YSYW. Position 138 (His-138) interacts with Zn(2+). Glu-139 is an active-site residue. His-142 contacts Zn(2+). The next 2 membrane-spanning stretches (helical) occupy residues 154–174 and 188–208; these read AAAV…AAIF and LVGL…QLAI. Glu-213 serves as a coordination point for Zn(2+).

The protein belongs to the peptidase M48B family. Zn(2+) is required as a cofactor.

It localises to the cell membrane. The protein is Protease HtpX homolog of Kocuria rhizophila (strain ATCC 9341 / DSM 348 / NBRC 103217 / DC2201).